We begin with the raw amino-acid sequence, 458 residues long: Phosphoglucosamine mutase (458 aa).

Residue Ser102 is the Phosphoserine intermediate of the active site. 4 residues coordinate Mg(2+): Ser102, Asp252, Asp254, and Asp256. Position 102 is a phosphoserine (Ser102).

This sequence belongs to the phosphohexose mutase family. Requires Mg(2+) as cofactor. Post-translationally, activated by phosphorylation.

It carries out the reaction alpha-D-glucosamine 1-phosphate = D-glucosamine 6-phosphate. Functionally, catalyzes the conversion of glucosamine-6-phosphate to glucosamine-1-phosphate. The sequence is that of Phosphoglucosamine mutase from Anaeromyxobacter dehalogenans (strain 2CP-C).